Consider the following 130-residue polypeptide: Fluoride-specific ion channel FluC (130 aa).

Helical transmembrane passes span valine 7–tryptophan 27, leucine 36–phenylalanine 56, alanine 69–valine 89, and leucine 99–isoleucine 119. Na(+) is bound by residues glycine 76 and threonine 79.

It belongs to the fluoride channel Fluc/FEX (TC 1.A.43) family.

The protein localises to the cell inner membrane. It carries out the reaction fluoride(in) = fluoride(out). Na(+) is not transported, but it plays an essential structural role and its presence is essential for fluoride channel function. Functionally, fluoride-specific ion channel. Important for reducing fluoride concentration in the cell, thus reducing its toxicity. The chain is Fluoride-specific ion channel FluC from Albidiferax ferrireducens (strain ATCC BAA-621 / DSM 15236 / T118) (Rhodoferax ferrireducens).